The chain runs to 451 residues: Protein naked cuticle homolog 2 (451 aa).

The disordered stretch occupies residues 1 to 108; sequence MGKLQSKHAA…PRGPGGQRLN (108 aa). Gly2 carries the N-myristoyl glycine lipid modification. Positions 2–173 are targeting to the basolateral cell membrane; it reads GKLQSKHAAA…GSSKTLRVKL (172 aa). Basic and acidic residues-rich tracts occupy residues 34 to 63 and 89 to 99; these read KGAE…REDQ and DGERAANREGP. The tract at residues 113–178 is interaction with DVL1, DVL2 and DVL3; the sequence is QCDVSVEEDD…LRVKLTVSPE (66 aa). An EF-hand domain is found at 119–154; sequence EEDDRQEWTFTLYDFDNCGKVTREDMSSLMHTIYEV. Asp132, Asp134, Lys138, and Asp143 together coordinate Ca(2+). Disordered stretches follow at residues 162–237 and 256–408; these read SSGS…PYCV and YTSR…TVEH. The segment covering 180 to 215 has biased composition (basic and acidic residues); that stretch reads SSKRKEGPPAGQDREPTRCRMEGELAEEPRVADRRL. An interaction with TGFA region spans residues 300–385; sequence QVLVEHVVPA…PPPPYGHKRY (86 aa). A compositionally biased stretch (low complexity) spans 332–351; the sequence is KSPKGSGKPPGVPASSKSGK.

This sequence belongs to the NKD family. In terms of assembly, interacts with DVL1, DVL2, DVL3 and PPP2R3A. Interacts with RNF25 and TGFA (via cytoplasmic domain). Ubiquitinated, leading to rapid proteasomal degradation. Interaction with TGFA interferes with RNF25 binding and protects against ubiquitination mediated by RNF25. Expressed in kidney, lung, pancreas and spleen.

It localises to the cell membrane. The protein localises to the cytoplasm. It is found in the cytoplasmic vesicle. Its function is as follows. Cell autonomous antagonist of the canonical Wnt signaling pathway. May activate a second Wnt signaling pathway that controls planar cell polarity. Required for processing of TGFA and for targeting of TGFA to the basolateral membrane of polarized epithelial cells. This chain is Protein naked cuticle homolog 2 (NKD2), found in Homo sapiens (Human).